We begin with the raw amino-acid sequence, 275 residues long: Ribosomal RNA small subunit methyltransferase A (275 aa).

S-adenosyl-L-methionine is bound by residues N28, L30, G55, E77, D103, and N123.

The protein belongs to the class I-like SAM-binding methyltransferase superfamily. rRNA adenine N(6)-methyltransferase family. RsmA subfamily.

The protein localises to the cytoplasm. The enzyme catalyses adenosine(1518)/adenosine(1519) in 16S rRNA + 4 S-adenosyl-L-methionine = N(6)-dimethyladenosine(1518)/N(6)-dimethyladenosine(1519) in 16S rRNA + 4 S-adenosyl-L-homocysteine + 4 H(+). In terms of biological role, specifically dimethylates two adjacent adenosines (A1518 and A1519) in the loop of a conserved hairpin near the 3'-end of 16S rRNA in the 30S particle. May play a critical role in biogenesis of 30S subunits. The sequence is that of Ribosomal RNA small subunit methyltransferase A from Rhizobium etli (strain ATCC 51251 / DSM 11541 / JCM 21823 / NBRC 15573 / CFN 42).